The sequence spans 393 residues: NAD(P)H-quinone oxidoreductase subunit H, chloroplastic (393 aa).

Belongs to the complex I 49 kDa subunit family. NDH is composed of at least 16 different subunits, 5 of which are encoded in the nucleus.

The protein localises to the plastid. It is found in the chloroplast thylakoid membrane. It carries out the reaction a plastoquinone + NADH + (n+1) H(+)(in) = a plastoquinol + NAD(+) + n H(+)(out). The enzyme catalyses a plastoquinone + NADPH + (n+1) H(+)(in) = a plastoquinol + NADP(+) + n H(+)(out). NDH shuttles electrons from NAD(P)H:plastoquinone, via FMN and iron-sulfur (Fe-S) centers, to quinones in the photosynthetic chain and possibly in a chloroplast respiratory chain. The immediate electron acceptor for the enzyme in this species is believed to be plastoquinone. Couples the redox reaction to proton translocation, and thus conserves the redox energy in a proton gradient. The sequence is that of NAD(P)H-quinone oxidoreductase subunit H, chloroplastic from Acorus calamus var. americanus (American sweet flag).